Here is a 356-residue protein sequence, read N- to C-terminus: MLNEGLCCGAWAMKGTLLLVSSVGLLLPGVGSCPMKCLCHPSSNSVDCSGQGLSKVPRDLPPWTVTLLLQDNRIHWLPALAFQSVSLLSTLNLSNNSLSNLAAEAFYGLPHLRVLNVTQNSLLSIESSFAHALPGLRELDLSSNSLRILPTSLGKPWENLTVFAVQQNHLLHLDRELLEAMPKVRLVLLKDNPWICDCHLLGLKLWLERFTFQGGETDGAICRLPEPWQGKALLSIPHELYQPCSLPSQDLAPSLVQQPGSAPQDAQKSHENSSGQQDPLECEAKPKPKPTNLRHAVATVVITGVVCGIVCLMMLAAAIYGCTYAAITAQYQGRPLASARKSEKMGSKELMDSSSA.

The first 32 residues, 1–32, serve as a signal peptide directing secretion; the sequence is MLNEGLCCGAWAMKGTLLLVSSVGLLLPGVGS. Residues 33–62 form the LRRNT domain; sequence CPMKCLCHPSSNSVDCSGQGLSKVPRDLPP. The Extracellular portion of the chain corresponds to 33 to 299; that stretch reads CPMKCLCHPS…PTNLRHAVAT (267 aa). LRR repeat units lie at residues 63 to 84, 87 to 108, 111 to 132, 135 to 156, and 159 to 180; these read WTVTLLLQDNRIHWLPALAFQS, LLSTLNLSNNSLSNLAAEAFYG, HLRVLNVTQNSLLSIESSFAHA, GLRELDLSSNSLRILPTSLGKP, and NLTVFAVQQNHLLHLDRELLEA. N-linked (GlcNAc...) asparagine glycans are attached at residues asparagine 92 and asparagine 116. Asparagine 159 is a glycosylation site (N-linked (GlcNAc...) asparagine). One can recognise an LRRCT domain in the interval 192 to 246; sequence NPWICDCHLLGLKLWLERFTFQGGETDGAICRLPEPWQGKALLSIPHELYQPCSL. Positions 255 to 277 are enriched in polar residues; that stretch reads LVQQPGSAPQDAQKSHENSSGQQ. The disordered stretch occupies residues 255–288; sequence LVQQPGSAPQDAQKSHENSSGQQDPLECEAKPKP. The chain crosses the membrane as a helical span at residues 300–320; sequence VVITGVVCGIVCLMMLAAAIY. The Cytoplasmic portion of the chain corresponds to 321–356; it reads GCTYAAITAQYQGRPLASARKSEKMGSKELMDSSSA.

The protein resides in the membrane. This is Leucine-rich repeat and transmembrane domain-containing protein 1 (Lrtm1) from Mus musculus (Mouse).